A 635-amino-acid chain; its full sequence is DNA mismatch repair protein MutL (635 aa).

The protein belongs to the DNA mismatch repair MutL/HexB family.

In terms of biological role, this protein is involved in the repair of mismatches in DNA. It is required for dam-dependent methyl-directed DNA mismatch repair. May act as a 'molecular matchmaker', a protein that promotes the formation of a stable complex between two or more DNA-binding proteins in an ATP-dependent manner without itself being part of a final effector complex. This is DNA mismatch repair protein MutL from Yersinia pestis bv. Antiqua (strain Angola).